A 404-amino-acid polypeptide reads, in one-letter code: Phosphoglycerate kinase (404 aa).

Substrate contacts are provided by residues 22–24 (DLN), Arg-37, 60–63 (HLGR), Arg-119, and Arg-156. ATP contacts are provided by residues Lys-206, Gly-302, Glu-333, and 359-362 (GGDS).

The protein belongs to the phosphoglycerate kinase family. Monomer.

It localises to the cytoplasm. It carries out the reaction (2R)-3-phosphoglycerate + ATP = (2R)-3-phospho-glyceroyl phosphate + ADP. Its pathway is carbohydrate degradation; glycolysis; pyruvate from D-glyceraldehyde 3-phosphate: step 2/5. This Clavibacter sepedonicus (Clavibacter michiganensis subsp. sepedonicus) protein is Phosphoglycerate kinase.